Reading from the N-terminus, the 270-residue chain is Thymidine kinase 2, mitochondrial (270 aa).

Residues 1 to 38 (MLLRSLRSWAARSPRSVGPGSSGSPGSLDSGAGPLWAP) constitute a mitochondrion transit peptide. The disordered stretch occupies residues 1–54 (MLLRSLRSWAARSPRSVGPGSSGSPGSLDSGAGPLWAPRRAWPPDKDRENDKEK). Low complexity predominate over residues 13-34 (SPRSVGPGSSGSPGSLDSGAGP). Residues 42–54 (WPPDKDRENDKEK) are compositionally biased toward basic and acidic residues. 62–70 (GNIASGKTT) contacts ATP. The Proton acceptor role is filled by glutamate 138.

Belongs to the DCK/DGK family. In terms of assembly, homodimer. As to expression, found in most tissues; highly expressed in liver.

It localises to the mitochondrion. It carries out the reaction thymidine + ATP = dTMP + ADP + H(+). It catalyses the reaction 2'-deoxycytidine + ATP = dCMP + ADP + H(+). The enzyme catalyses 2'-deoxyuridine + ATP = dUMP + ADP + H(+). Phosphorylates thymidine, deoxycytidine, and deoxyuridine in the mitochondrial matrix. In non-replicating cells, where cytosolic dNTP synthesis is down-regulated, mtDNA synthesis depends solely on TK2 and DGUOK. This is Thymidine kinase 2, mitochondrial (Tk2) from Mus musculus (Mouse).